Consider the following 265-residue polypeptide: Acetylglutamate kinase (265 aa).

Substrate contacts are provided by residues 41–42 (GG), Arg63, and Asn156.

Belongs to the acetylglutamate kinase family. ArgB subfamily.

The protein resides in the cytoplasm. It catalyses the reaction N-acetyl-L-glutamate + ATP = N-acetyl-L-glutamyl 5-phosphate + ADP. Its pathway is amino-acid biosynthesis; L-arginine biosynthesis; N(2)-acetyl-L-ornithine from L-glutamate: step 2/4. Functionally, catalyzes the ATP-dependent phosphorylation of N-acetyl-L-glutamate. This Brevibacillus brevis (strain 47 / JCM 6285 / NBRC 100599) protein is Acetylglutamate kinase.